A 750-amino-acid polypeptide reads, in one-letter code: uncharacterized protein (750 aa).

N-linked (GlcNAc...) asparagine glycans are attached at residues Asn-61, Asn-84, Asn-115, Asn-154, Asn-176, Asn-197, Asn-207, Asn-228, Asn-241, Asn-267, Asn-293, Asn-299, Asn-312, Asn-335, Asn-351, Asn-373, Asn-389, and Asn-519. Ser-675 and Ser-678 each carry phosphoserine. A Glycyl lysine isopeptide (Lys-Gly) (interchain with G-Cter in ubiquitin) cross-link involves residue Lys-697. 2 stretches are compositionally biased toward polar residues: residues 703–726 (EITA…SNRT) and 736–750 (KDSN…HLVA). The segment at 703–750 (EITAIDNSSSANNTDVTGSTSNRTELSHPDVTPKDSNGPVNNNAHLVA) is disordered. Residues Asn-709, Asn-714, and Asn-724 are each glycosylated (N-linked (GlcNAc...) asparagine).

N-glycosylated.

The protein localises to the mitochondrion. This is an uncharacterized protein from Saccharomyces cerevisiae (strain ATCC 204508 / S288c) (Baker's yeast).